Reading from the N-terminus, the 158-residue chain is Protein-export protein SecB (158 aa).

The protein belongs to the SecB family. In terms of assembly, homotetramer, a dimer of dimers. One homotetramer interacts with 1 SecA dimer.

It localises to the cytoplasm. Its function is as follows. One of the proteins required for the normal export of preproteins out of the cell cytoplasm. It is a molecular chaperone that binds to a subset of precursor proteins, maintaining them in a translocation-competent state. It also specifically binds to its receptor SecA. The sequence is that of Protein-export protein SecB from Photorhabdus laumondii subsp. laumondii (strain DSM 15139 / CIP 105565 / TT01) (Photorhabdus luminescens subsp. laumondii).